A 143-amino-acid chain; its full sequence is uncharacterized protein (143 aa).

Residues isoleucine 24 to phenylalanine 78 enclose the HTH cro/C1-type domain. A DNA-binding region (H-T-H motif) is located at residues glutamine 35 to lysine 54.

This is an uncharacterized protein from Sinorhizobium fredii (strain NBRC 101917 / NGR234).